The chain runs to 269 residues: Adenosylcobinamide-GDP ribazoletransferase (269 aa).

6 helical membrane-spanning segments follow: residues 63 to 83, 87 to 107, 137 to 157, 158 to 178, 202 to 222, and 246 to 266; these read SAYY…LLYL, LPPG…TGML, VGAF…SLLG, AGLP…VVLM, LAFL…AALV, and VYGL…GWGF.

It belongs to the CobS family. Requires Mg(2+) as cofactor.

It is found in the cell membrane. The enzyme catalyses alpha-ribazole + adenosylcob(III)inamide-GDP = adenosylcob(III)alamin + GMP + H(+). It carries out the reaction alpha-ribazole 5'-phosphate + adenosylcob(III)inamide-GDP = adenosylcob(III)alamin 5'-phosphate + GMP + H(+). The protein operates within cofactor biosynthesis; adenosylcobalamin biosynthesis; adenosylcobalamin from cob(II)yrinate a,c-diamide: step 7/7. Functionally, joins adenosylcobinamide-GDP and alpha-ribazole to generate adenosylcobalamin (Ado-cobalamin). Also synthesizes adenosylcobalamin 5'-phosphate from adenosylcobinamide-GDP and alpha-ribazole 5'-phosphate. The sequence is that of Adenosylcobinamide-GDP ribazoletransferase from Deinococcus radiodurans (strain ATCC 13939 / DSM 20539 / JCM 16871 / CCUG 27074 / LMG 4051 / NBRC 15346 / NCIMB 9279 / VKM B-1422 / R1).